Reading from the N-terminus, the 507-residue chain is Prolyl carboxy peptidase like protein 5 (507 aa).

The N-terminal stretch at 1–16 (MNIFISLAILIATTHC) is a signal peptide. Asn-125 carries N-linked (GlcNAc...) asparagine glycosylation. Catalysis depends on Ser-172, which acts as the Charge relay system. N-linked (GlcNAc...) asparagine glycans are attached at residues Asn-332 and Asn-407. Residues Asp-439 and His-466 each act as charge relay system in the active site.

The protein belongs to the peptidase S28 family.

The sequence is that of Prolyl carboxy peptidase like protein 5 from Caenorhabditis elegans.